We begin with the raw amino-acid sequence, 636 residues long: DNA-directed RNA polymerase subunit gamma (636 aa).

Positions 71, 73, 86, and 89 each coordinate Zn(2+). Mg(2+) contacts are provided by Asp-467, Asp-469, and Asp-471.

The protein belongs to the RNA polymerase beta' chain family. RpoC1 subfamily. In terms of assembly, in cyanobacteria the RNAP catalytic core is composed of 2 alpha, 1 beta, 1 beta', 1 gamma and 1 omega subunit. When a sigma factor is associated with the core the holoenzyme is formed, which can initiate transcription. Mg(2+) serves as cofactor. Zn(2+) is required as a cofactor.

The catalysed reaction is RNA(n) + a ribonucleoside 5'-triphosphate = RNA(n+1) + diphosphate. Functionally, DNA-dependent RNA polymerase catalyzes the transcription of DNA into RNA using the four ribonucleoside triphosphates as substrates. This is DNA-directed RNA polymerase subunit gamma from Picosynechococcus sp. (strain ATCC 27264 / PCC 7002 / PR-6) (Agmenellum quadruplicatum).